The following is a 368-amino-acid chain: tRNA-specific 2-thiouridylase MnmA (368 aa).

ATP-binding positions include 12 to 19 (GMSGGVDS) and methionine 38. The segment at 98 to 100 (NPD) is interaction with target base in tRNA. The Nucleophile role is filled by cysteine 103. A disulfide bond links cysteine 103 and cysteine 200. Glycine 128 is an ATP binding site. The tract at residues 150 to 152 (KDQ) is interaction with tRNA. The active-site Cysteine persulfide intermediate is cysteine 200. The interaction with tRNA stretch occupies residues 313 to 314 (RY).

The protein belongs to the MnmA/TRMU family. Interacts with TusE.

The protein resides in the cytoplasm. The catalysed reaction is S-sulfanyl-L-cysteinyl-[protein] + uridine(34) in tRNA + AH2 + ATP = 2-thiouridine(34) in tRNA + L-cysteinyl-[protein] + A + AMP + diphosphate + H(+). In terms of biological role, catalyzes the 2-thiolation of uridine at the wobble position (U34) of tRNA(Lys), tRNA(Glu) and tRNA(Gln), leading to the formation of s(2)U34, the first step of tRNA-mnm(5)s(2)U34 synthesis. Sulfur is provided by IscS, via a sulfur-relay system. Binds ATP and its substrate tRNAs. This is tRNA-specific 2-thiouridylase MnmA from Pectobacterium carotovorum subsp. carotovorum (strain PC1).